The following is a 1314-amino-acid chain: Enfumafungin synthase efuA (1314 aa).

The interval 1–680 is terpenne cyclase; the sequence is MPSYHNTDKT…RYIDKASRQG (680 aa). PFTB repeat units lie at residues 19–62 and 66–107; these read LQQA…ELSL and GPEI…RILG. Helical transmembrane passes span 133–153, 155–175, and 230–250; these read FFTR…IPQM, AELI…SSWA, and YQWI…FGGL. Residues 260–300 form a PFTB 3 repeat; the sequence is LKRCTAWLLEHQEESGDWAGFFPPIHGSIWALLLDGFSFQS. The active-site Proton donor is D395. 2 PFTB repeats span residues 417 to 458 and 546 to 597; these read VMNG…DSLV and CMRT…LRFR. The interval 681 to 1314 is glycosyltransferase; sequence IETLRIPSSS…ADSVLDIEEK (634 aa). Residues 1200-1220 traverse the membrane as a helical segment; the sequence is AIVQLLYGFTTTILALFGWLK. Positions 1289–1314 are disordered; that stretch reads DSGASESSRSSLDGGHADSVLDIEEK. Over residues 1292 to 1302 the composition is skewed to low complexity; it reads ASESSRSSLDG.

This sequence in the N-terminal section; belongs to the terpene cyclase/mutase family. In the C-terminal section; belongs to the glycosyltransferase 28 family.

It is found in the membrane. Its pathway is secondary metabolite biosynthesis; terpenoid biosynthesis. Terpene cyclase-glycosyl transferase fusion protein; part of the gene cluster that mediates the biosynthesis of enfumafungin, a glycosylated fernene-type triterpenoid with potent antifungal activity, mediated by its interaction with beta-1,3-glucan synthase and the fungal cell wall. The pathway begins with the terpene cyclase-glycosyl transferase fusion protein that most likely uses 2,3-oxidosqualene as substrate and catalyzes glycosylation immediately after cyclization. The fernene glycoside then could be processed by the desaturase efuI which catalyzes isomerization of a double bond established by efuA to form the core structure. The latter would then undergo a series of hydroxylations in unknown order at C-2, C-19, C-23 and C-25, which would be catalyzed by two of the three cytochrome P450 monooxygenases efuB, efuG or efuH. The hydroxy-group at C-25 becomes oxidized by the dehydrogenase efuE to enable a spontaneous, non-enzymatic hemiacetal formation with C-23. After hydroxylation at C-2, acetylation by the acetyltransferase efuC takes place. The final steps in enfumafungin biosynthesis require expansion of the 5-membered ring by lactonization via a Baeyer-Villiger reaction mediated by one of the BGC's cytochrome P450 monooxygenases (efuB, efuG or efuH) followed by ring cleavage. This type of reaction would establish a double bond between C-20 and C-21 which could be reduced by the reductase efuL to form the final product. The chain is Enfumafungin synthase efuA from Hormonema carpetanum.